A 474-amino-acid chain; its full sequence is tRNA (guanine(37)-N(1))-methyltransferase (474 aa).

S-adenosyl-L-methionine is bound by residues His-234, 274–275, 303–304, and Asn-345; these read DL and DA. Positions 452-464 are enriched in acidic residues; it reads EPEAQCESEEAEE. The tract at residues 452 to 474 is disordered; the sequence is EPEAQCESEEAEEPSSKRIKVDT. Residues 465-474 show a composition bias toward basic and acidic residues; sequence PSSKRIKVDT.

Belongs to the class I-like SAM-binding methyltransferase superfamily. TRM5/TYW2 family. Monomer.

The protein localises to the mitochondrion matrix. It localises to the nucleus. Its subcellular location is the cytoplasm. It carries out the reaction guanosine(37) in tRNA + S-adenosyl-L-methionine = N(1)-methylguanosine(37) in tRNA + S-adenosyl-L-homocysteine + H(+). Its function is as follows. Specifically methylates the N1 position of guanosine-37 in various cytoplasmic and mitochondrial tRNAs. Methylation is not dependent on the nature of the nucleoside 5' of the target nucleoside. This is the first step in the biosynthesis of wybutosine (yW), a modified base adjacent to the anticodon of tRNAs and required for accurate decoding. The chain is tRNA (guanine(37)-N(1))-methyltransferase from Caenorhabditis elegans.